Reading from the N-terminus, the 683-residue chain is Dynein, 78 kDa intermediate chain, flagellar outer arm (683 aa).

Residues 1–42 are disordered; the sequence is MPALSPAKKGTDKGKTGKKTGKQEQNAQDYIPPPPPMPGDEA. WD repeat units lie at residues 358-398, 407-450, 562-602, and 608-647; these read HTES…DEPI, KLND…LIPE, DLND…LLPL, and VKKA…RITS.

Belongs to the dynein intermediate chain family. Consists of at least 3 heavy chains (alpha, beta and gamma), 2 intermediate chains and 8 light chains.

The protein localises to the cytoplasm. Its subcellular location is the cytoskeleton. The protein resides in the flagellum axoneme. In terms of biological role, is essential for arm assembly or attachment to the outer doublet microtubule. This Chlamydomonas reinhardtii (Chlamydomonas smithii) protein is Dynein, 78 kDa intermediate chain, flagellar outer arm (ODA9).